The following is a 258-amino-acid chain: Aspartate/glutamate leucyltransferase (258 aa).

The protein belongs to the R-transferase family. Bpt subfamily.

It is found in the cytoplasm. It catalyses the reaction N-terminal L-glutamyl-[protein] + L-leucyl-tRNA(Leu) = N-terminal L-leucyl-L-glutamyl-[protein] + tRNA(Leu) + H(+). The catalysed reaction is N-terminal L-aspartyl-[protein] + L-leucyl-tRNA(Leu) = N-terminal L-leucyl-L-aspartyl-[protein] + tRNA(Leu) + H(+). Its function is as follows. Functions in the N-end rule pathway of protein degradation where it conjugates Leu from its aminoacyl-tRNA to the N-termini of proteins containing an N-terminal aspartate or glutamate. The chain is Aspartate/glutamate leucyltransferase from Bradyrhizobium diazoefficiens (strain JCM 10833 / BCRC 13528 / IAM 13628 / NBRC 14792 / USDA 110).